Here is a 58-residue protein sequence, read N- to C-terminus: Putative antitoxin VapB16 (58 aa).

Functionally, putative antitoxin component of a possible type II toxin-antitoxin (TA) system. The cognate toxin is VapC16. In Mycobacterium tuberculosis (strain ATCC 25618 / H37Rv), this protein is Putative antitoxin VapB16 (vapB16).